The sequence spans 286 residues: 4-diphosphocytidyl-2-C-methyl-D-erythritol kinase (286 aa).

Lys-13 is an active-site residue. An ATP-binding site is contributed by 101-111 (PQGAGLGGGSS). Residue Asp-143 is part of the active site.

This sequence belongs to the GHMP kinase family. IspE subfamily.

It carries out the reaction 4-CDP-2-C-methyl-D-erythritol + ATP = 4-CDP-2-C-methyl-D-erythritol 2-phosphate + ADP + H(+). Its pathway is isoprenoid biosynthesis; isopentenyl diphosphate biosynthesis via DXP pathway; isopentenyl diphosphate from 1-deoxy-D-xylulose 5-phosphate: step 3/6. Functionally, catalyzes the phosphorylation of the position 2 hydroxy group of 4-diphosphocytidyl-2C-methyl-D-erythritol. This is 4-diphosphocytidyl-2-C-methyl-D-erythritol kinase from Idiomarina loihiensis (strain ATCC BAA-735 / DSM 15497 / L2-TR).